The chain runs to 436 residues: Serine/threonine-protein kinase STK11 (436 aa).

A Phosphoserine modification is found at serine 31. N6-acetyllysine is present on residues lysine 44 and lysine 48. Positions 45-90 (LIGKYLMGDLLGEGSYGKVKEVLDSETLCRRAVKILKKKKLRRIPN) are sufficient for interaction with SIRT1. Residues 49-309 (YLMGDLLGEG…IRQIRQHSWF (261 aa)) enclose the Protein kinase domain. ATP is bound by residues 55 to 63 (LGEGSYGKV) and lysine 78. 2 positions are modified to N6-acetyllysine: lysine 96 and lysine 97. The Proton acceptor role is filled by aspartate 176. Threonine 189 is subject to Phosphothreonine; by autocatalysis. 2 positions are modified to N6-acetyllysine: lysine 296 and lysine 311. Serine 325 is subject to Phosphoserine. At threonine 336 the chain carries Phosphothreonine; by autocatalysis. At threonine 366 the chain carries Phosphothreonine; by ATM and autocatalysis. Residues 397–421 (GTEPQLSSKVKPEGRPGAANPARKV) are disordered. The residue at position 403 (serine 403) is a Phosphoserine. Lysine 420 is subject to N6-acetyllysine. Cysteine 422 carries S-palmitoyl cysteine lipidation. The residue at position 426 (lysine 426) is an N6-acetyllysine. Serine 431 bears the Phosphoserine; by autocatalysis, PKA, PKC/PRKCZ and RPS6KA1 mark. At cysteine 433 the chain carries Cysteine methyl ester. Cysteine 433 is lipidated: S-farnesyl cysteine. The residue at position 434 (lysine 434) is an N6-acetyllysine. Residues 434-436 (KQQ) constitute a propeptide, removed in mature form.

The protein belongs to the protein kinase superfamily. CAMK Ser/Thr protein kinase family. LKB1 subfamily. Catalytic component of a trimeric complex composed of STK11/LKB1, STRAD (STRADA or STRADB) and CAB39/MO25 (CAB39/MO25alpha or CAB39L/MO25beta): the complex tethers STK11/LKB1 in the cytoplasm and stimulates its catalytic activity. Found in a ternary complex composed of SMAD4, STK11/LKB1 and STK11IP. Interacts with NR4A1, p53/TP53, SMAD4, STK11IP and WDR6. Interacts with NISCH; this interaction may increase STK11 activity. Interacts with SIRT1; the interaction deacetylates STK11. Interacts with CDKN1A. Mg(2+) serves as cofactor. Requires Mn(2+) as cofactor. Phosphorylated by ATM at Thr-366 following ionizing radiation (IR). Phosphorylation at Ser-431 by RPS6KA1 and/or some PKA is required to inhibit cell growth. Phosphorylation at Ser-431 is also required during neuronal polarization to mediate phosphorylation of BRSK1 and BRSK2. Phosphorylation by PKC/PRKCZ at Ser-397 in isoform 2 promotes metformin (or peroxynitrite)-induced nuclear export of STK11 and activation of AMPK. UV radiation -induced phosphorylation at Thr-366 mediates CDKN1A degradation. Post-translationally, acetylated. Deacetylation at Lys-48 enhances cytoplasmic localization and kinase activity in vitro. Expressed in brain, heart, testis, skeletal muscle and spleen, and weakly in liver and kidney. Isoform 1 is expressed at highest levels in the brain. Isoform 2 is expressed at highest levels in the testis, primarily in postmitotic developing germ cells (at protein level).

Its subcellular location is the nucleus. The protein localises to the cytoplasm. It is found in the membrane. The protein resides in the mitochondrion. The catalysed reaction is L-seryl-[protein] + ATP = O-phospho-L-seryl-[protein] + ADP + H(+). The enzyme catalyses L-threonyl-[protein] + ATP = O-phospho-L-threonyl-[protein] + ADP + H(+). With respect to regulation, activated by forming a complex with STRAD (STRADA or STRADB) and CAB39/MO25 (CAB39/MO25alpha or CAB39L/MO25beta): STRADA (or STRADB)-binding promotes a conformational change of STK11/LKB1 in an active conformation, which is stabilized by CAB39/MO25alpha (or CAB39L/MO25beta) interacting with the STK11/LKB1 activation loop. Sequestration in the nucleus by NR4A1 prevents it from phosphorylating and activating cytoplasmic AMPK. Tumor suppressor serine/threonine-protein kinase that controls the activity of AMP-activated protein kinase (AMPK) family members, thereby playing a role in various processes such as cell metabolism, cell polarity, apoptosis and DNA damage response. Acts by phosphorylating the T-loop of AMPK family proteins, thus promoting their activity: phosphorylates PRKAA1, PRKAA2, BRSK1, BRSK2, MARK1, MARK2, MARK3, MARK4, NUAK1, NUAK2, SIK1, SIK2, SIK3 and SNRK but not MELK. Also phosphorylates non-AMPK family proteins such as STRADA, PTEN and possibly p53/TP53. Acts as a key upstream regulator of AMPK by mediating phosphorylation and activation of AMPK catalytic subunits PRKAA1 and PRKAA2 and thereby regulates processes including: inhibition of signaling pathways that promote cell growth and proliferation when energy levels are low, glucose homeostasis in liver, activation of autophagy when cells undergo nutrient deprivation, and B-cell differentiation in the germinal center in response to DNA damage. Also acts as a regulator of cellular polarity by remodeling the actin cytoskeleton. Required for cortical neuron polarization by mediating phosphorylation and activation of BRSK1 and BRSK2, leading to axon initiation and specification. Involved in DNA damage response: interacts with p53/TP53 and recruited to the CDKN1A/WAF1 promoter to participate in transcription activation. Able to phosphorylate p53/TP53; the relevance of such result in vivo is however unclear and phosphorylation may be indirect and mediated by downstream STK11/LKB1 kinase NUAK1. Also acts as a mediator of p53/TP53-dependent apoptosis via interaction with p53/TP53: translocates to the mitochondrion during apoptosis and regulates p53/TP53-dependent apoptosis pathways. Regulates UV radiation-induced DNA damage response mediated by CDKN1A. In association with NUAK1, phosphorylates CDKN1A in response to UV radiation and contributes to its degradation which is necessary for optimal DNA repair. Functionally, has a role in spermiogenesis. The chain is Serine/threonine-protein kinase STK11 from Rattus norvegicus (Rat).